We begin with the raw amino-acid sequence, 395 residues long: Flap endonuclease 1 (395 aa).

The interval 1–104 (MGIKQLFQII…GELAKRFQRK (104 aa)) is N-domain. Asp-34 is a Mg(2+) binding site. DNA contacts are provided by Arg-47 and Arg-70. Positions 86, 158, 160, 179, and 181 each coordinate Mg(2+). An I-domain region spans residues 122–253 (DIEKFSRRTV…TTALKLIRDH (132 aa)). Glu-158 contributes to the DNA binding site. DNA contacts are provided by Gly-231 and Asp-233. Residue Asp-233 participates in Mg(2+) binding. Residues 341–349 (QQARLEGFF) form an interaction with PCNA region. Residues 344 to 395 (RLEGFFKPVPKTDAQKAAHKRKLEEKNEEKKKKLKQEKKDKAAAKSKPRGAA) form a disordered region. Positions 365–386 (KLEEKNEEKKKKLKQEKKDKAA) are enriched in basic and acidic residues.

Belongs to the XPG/RAD2 endonuclease family. FEN1 subfamily. Interacts with PCNA. Three molecules of FEN1 bind to one PCNA trimer with each molecule binding to one PCNA monomer. PCNA stimulates the nuclease activity without altering cleavage specificity. Mg(2+) serves as cofactor. Post-translationally, phosphorylated. Phosphorylation upon DNA damage induces relocalization to the nuclear plasma.

The protein localises to the nucleus. The protein resides in the nucleolus. It is found in the nucleoplasm. It localises to the mitochondrion. In terms of biological role, structure-specific nuclease with 5'-flap endonuclease and 5'-3' exonuclease activities involved in DNA replication and repair. During DNA replication, cleaves the 5'-overhanging flap structure that is generated by displacement synthesis when DNA polymerase encounters the 5'-end of a downstream Okazaki fragment. It enters the flap from the 5'-end and then tracks to cleave the flap base, leaving a nick for ligation. Also involved in the long patch base excision repair (LP-BER) pathway, by cleaving within the apurinic/apyrimidinic (AP) site-terminated flap. Acts as a genome stabilization factor that prevents flaps from equilibrating into structures that lead to duplications and deletions. Also possesses 5'-3' exonuclease activity on nicked or gapped double-stranded DNA, and exhibits RNase H activity. Also involved in replication and repair of rDNA and in repairing mitochondrial DNA. This chain is Flap endonuclease 1, found in Fusarium vanettenii (strain ATCC MYA-4622 / CBS 123669 / FGSC 9596 / NRRL 45880 / 77-13-4) (Fusarium solani subsp. pisi).